The following is a 263-amino-acid chain: Hydroxyacylglutathione hydrolase (263 aa).

H55, H57, D59, H60, H117, D134, and H172 together coordinate Zn(2+).

It belongs to the metallo-beta-lactamase superfamily. Glyoxalase II family. Monomer. Zn(2+) serves as cofactor.

It catalyses the reaction an S-(2-hydroxyacyl)glutathione + H2O = a 2-hydroxy carboxylate + glutathione + H(+). The protein operates within secondary metabolite metabolism; methylglyoxal degradation; (R)-lactate from methylglyoxal: step 2/2. In terms of biological role, thiolesterase that catalyzes the hydrolysis of S-D-lactoyl-glutathione to form glutathione and D-lactic acid. In Shewanella baltica (strain OS195), this protein is Hydroxyacylglutathione hydrolase.